The following is a 355-amino-acid chain: Oligopeptide transport ATP-binding protein AmiE (355 aa).

Positions 9–260 (LTARDIVVEF…PRHPYTWSLL (252 aa)) constitute an ABC transporter domain. ATP is bound at residue 45-52 (GESGSGKS).

It belongs to the ABC transporter superfamily.

It localises to the cell membrane. In terms of biological role, part of the binding-protein-dependent transport system for oligopeptides. Probably responsible for energy coupling to the transport system. This is Oligopeptide transport ATP-binding protein AmiE (amiE) from Streptococcus pneumoniae serotype 4 (strain ATCC BAA-334 / TIGR4).